The chain runs to 293 residues: Elongation factor Ts (293 aa).

Residues 79 to 82 (TDFV) form an involved in Mg(2+) ion dislocation from EF-Tu region.

The protein belongs to the EF-Ts family.

Its subcellular location is the cytoplasm. Associates with the EF-Tu.GDP complex and induces the exchange of GDP to GTP. It remains bound to the aminoacyl-tRNA.EF-Tu.GTP complex up to the GTP hydrolysis stage on the ribosome. This Bacillus pumilus (strain SAFR-032) protein is Elongation factor Ts.